A 193-amino-acid chain; its full sequence is MKGLHLHLVLVTMTIVASIAAAAPAAPGGALADECNQDFQKVTLCLDFATGKATIPSKKCCDAVEDIKERDPKCLCFVIQQAKTGGQALKDLGVQEDKLIQLPTSCQLHNASITNCPKLLGISPSSPDAAVFTNNATTTPVAPAGKSPATPATSTDKGGSASAKDGHAVVALAVALMAVSFVLTLPRHVTLGM.

The signal sequence occupies residues 1–22 (MKGLHLHLVLVTMTIVASIAAA). Cystine bridges form between C35-C76, C45-C60, C61-C106, and C74-C116. N-linked (GlcNAc...) asparagine glycosylation is found at N110 and N135. The interval 138–161 (TTPVAPAGKSPATPATSTDKGGSA) is disordered. Residue D165 is the site of GPI-anchor amidated aspartate attachment. The propeptide at 166 to 193 (GHAVVALAVALMAVSFVLTLPRHVTLGM) is removed in mature form.

Belongs to the plant LTP family. In terms of processing, O-glycosylated on hydroxyprolines; noncontiguous hydroxylproline residues are glycosylated with arabinogalactan. As to expression, up-regulated in the epidermis of stems and leaves. Expressed in the epidermis, stem cortex, vascular bundles and mesophyll cells in root tips, cotyledons, seedlings, leaves, caulines, flowers, siliques, pollen, and early-developing seeds.

Its subcellular location is the cell membrane. It localises to the secreted. The protein resides in the cell wall. It is found in the endoplasmic reticulum. The protein localises to the golgi apparatus. Its function is as follows. Lipid transfer protein that, together with LTPG2, binds to lipids and functions as a component of the cuticular lipid export machinery that performs extensive export of intracellular lipids (e.g. C29 alkane) from epidermal cells to the surface to build the cuticular wax layer and silique walls. Involved in the establishment of resistance to the necrotrophic fungal pathogen Alternaria brassicicola. Contributes to pre-invasive defense against some non-host powdery mildew pathogens by preventing the penetration of the epidermal cell wall by the fungal agents (e.g. Blumeria graminis f. sp. hordei (Bgh)). Maybe involved in seed and ovule maturation and development, probably by regulating the fatty acids homeostasis during suberin and sporopollenin biosynthesis or deposition. The chain is Non-specific lipid transfer protein GPI-anchored 1 from Arabidopsis thaliana (Mouse-ear cress).